Here is an 83-residue protein sequence, read N- to C-terminus: Cytochrome b559 subunit alpha (83 aa).

The helical transmembrane segment at 21-35 (VIHSITIPSLFIAGW) threads the bilayer. Residue His-23 participates in heme binding.

It belongs to the PsbE/PsbF family. Heterodimer of an alpha subunit and a beta subunit. PSII is composed of 1 copy each of membrane proteins PsbA, PsbB, PsbC, PsbD, PsbE, PsbF, PsbH, PsbI, PsbJ, PsbK, PsbL, PsbM, PsbT, PsbX, PsbY, PsbZ, Psb30/Ycf12, at least 3 peripheral proteins of the oxygen-evolving complex and a large number of cofactors. It forms dimeric complexes. The cofactor is heme b.

The protein localises to the plastid. Its subcellular location is the chloroplast thylakoid membrane. Its function is as follows. This b-type cytochrome is tightly associated with the reaction center of photosystem II (PSII). PSII is a light-driven water:plastoquinone oxidoreductase that uses light energy to abstract electrons from H(2)O, generating O(2) and a proton gradient subsequently used for ATP formation. It consists of a core antenna complex that captures photons, and an electron transfer chain that converts photonic excitation into a charge separation. The polypeptide is Cytochrome b559 subunit alpha (Physcomitrium patens (Spreading-leaved earth moss)).